The chain runs to 504 residues: Histidine ammonia-lyase (504 aa).

Residues 142–144 (ASG) constitute a cross-link (5-imidazolinone (Ala-Gly)). Position 143 is a 2,3-didehydroalanine (Ser) (serine 143).

It belongs to the PAL/histidase family. Contains an active site 4-methylidene-imidazol-5-one (MIO), which is formed autocatalytically by cyclization and dehydration of residues Ala-Ser-Gly.

Its subcellular location is the cytoplasm. It catalyses the reaction L-histidine = trans-urocanate + NH4(+). The protein operates within amino-acid degradation; L-histidine degradation into L-glutamate; N-formimidoyl-L-glutamate from L-histidine: step 1/3. The protein is Histidine ammonia-lyase of Staphylococcus aureus (strain MRSA252).